The primary structure comprises 322 residues: uncharacterized protein (322 aa).

Basic residues-rich tracts occupy residues 1 to 16 (MPGN…KSGT) and 43 to 61 (LRPH…RRPV). Residues 1–69 (MPGNSRRRGA…PVKRADETET (69 aa)) are disordered. The S-adenosyl-L-methionine site is built by glycine 261, isoleucine 281, and leucine 290.

The protein belongs to the class IV-like SAM-binding methyltransferase superfamily. RNA methyltransferase TrmH family.

This is an uncharacterized protein from Mycobacterium bovis (strain BCG / Pasteur 1173P2).